The chain runs to 312 residues: uncharacterized protein (312 aa).

It belongs to the asfivirus CP312R family.

The protein localises to the virion. This is an uncharacterized protein from African swine fever virus (isolate Warthog/Namibia/Wart80/1980) (ASFV).